The primary structure comprises 327 residues: Beta-1,4-galactosyltransferase 7 (327 aa).

At 1–30 (MFPSRRKAAQLPWEDGRSGLLSGGLPRKCS) the chain is on the cytoplasmic side. The helical; Signal-anchor for type II membrane protein transmembrane segment at 31-51 (VFHLFVACLSLGFFSLLWLQL) threads the bilayer. Topologically, residues 52–327 (SCSGDVARAV…KTATPWCTFS (276 aa)) are lumenal. Residues 63–87 (GQGQETSGPPRACPPEPPPEHWEED) are disordered. Residues 100-104 (PFRER) and 139-141 (FNR) each bind UDP-alpha-D-galactose. An N-linked (GlcNAc...) asparagine glycan is attached at asparagine 154. UDP-alpha-D-galactose is bound by residues 164 to 165 (VD), tyrosine 194, and tryptophan 224. Aspartate 165 contributes to the Mn(2+) binding site. 226 to 229 (REDD) contributes to the N-acetyl-D-glucosamine binding site. Position 257 (histidine 257) interacts with Mn(2+). UDP-alpha-D-galactose-binding positions include 257–259 (HLH) and arginine 266. The cysteines at positions 316 and 324 are disulfide-linked.

This sequence belongs to the glycosyltransferase 7 family. Requires Mn(2+) as cofactor. In terms of tissue distribution, high expression in heart, pancreas and liver, medium in placenta and kidney, low in brain, skeletal muscle and lung.

It is found in the golgi apparatus. The protein resides in the golgi stack membrane. The catalysed reaction is 3-O-(beta-D-xylosyl)-L-seryl-[protein] + UDP-alpha-D-galactose = 3-O-(beta-D-galactosyl-(1-&gt;4)-beta-D-xylosyl)-L-seryl-[protein] + UDP + H(+). The protein operates within protein modification; protein glycosylation. Functionally, required for the biosynthesis of the tetrasaccharide linkage region of proteoglycans, especially for small proteoglycans in skin fibroblasts. This Homo sapiens (Human) protein is Beta-1,4-galactosyltransferase 7 (B4GALT7).